The following is a 478-amino-acid chain: MKRSRRTKIVATLGPASDTPEMIEKLFHAGADVFRINMSHLAREKLPERIEVIRTIEREAKRPIGILVDLQGPKLRLGTFVGDAAVLENGQTFVLDSDPTPGDTDRVFLPHPEILSALEPSHGILIDDGKLRLIVTEVSEGRAVTRVEVGGRISNRKGVSLPHTVLPVPAMTEKDRGDLEAGLAAGADWIAVSFVQRPEDVAEVKKVAAGRALVMAKIEKPQALTRLDEIIEISDGIMVARGDLGVEMPLEQVPGVQKRITRVARRLGKPVVVATQMLESMITSPVPTRAEVSDVATAVYEGADAVMLSAESAAGDFPVEAIGTMNRIAEQVERDALYWSILMAQRSEPEPTASDAIAAAAHQIVEALSLRSIMAWTHSGSTVLRLARARPNASVIALTPKRETARRLTMAWGVHPIVTKDASDVDDMAFRAAKFAVRERFAEIGDRVIIVAGVPFGIPGATNMVRIAFVTREHAERA.

Arg35 serves as a coordination point for substrate. Residues Asn37, Ser39, and Asp69 each contribute to the K(+) site. 37-40 (NMSH) is an ATP binding site. 2 residues coordinate ATP: Arg76 and Lys157. A Mg(2+)-binding site is contributed by Glu219. Positions 242, 243, and 275 each coordinate substrate. Asp243 contributes to the Mg(2+) binding site.

Belongs to the pyruvate kinase family. In terms of assembly, homotetramer. Mg(2+) is required as a cofactor. It depends on K(+) as a cofactor.

The enzyme catalyses pyruvate + ATP = phosphoenolpyruvate + ADP + H(+). It participates in carbohydrate degradation; glycolysis; pyruvate from D-glyceraldehyde 3-phosphate: step 5/5. The sequence is that of Pyruvate kinase (pyk) from Methylorubrum extorquens (strain ATCC 14718 / DSM 1338 / JCM 2805 / NCIMB 9133 / AM1) (Methylobacterium extorquens).